The chain runs to 234 residues: Biosynthetic peptidoglycan transglycosylase (234 aa).

Residues 11–31 (RFLLFAMLGFVGLSVLLVLVF) traverse the membrane as a helical segment.

The protein belongs to the glycosyltransferase 51 family.

It is found in the cell inner membrane. It catalyses the reaction [GlcNAc-(1-&gt;4)-Mur2Ac(oyl-L-Ala-gamma-D-Glu-L-Lys-D-Ala-D-Ala)](n)-di-trans,octa-cis-undecaprenyl diphosphate + beta-D-GlcNAc-(1-&gt;4)-Mur2Ac(oyl-L-Ala-gamma-D-Glu-L-Lys-D-Ala-D-Ala)-di-trans,octa-cis-undecaprenyl diphosphate = [GlcNAc-(1-&gt;4)-Mur2Ac(oyl-L-Ala-gamma-D-Glu-L-Lys-D-Ala-D-Ala)](n+1)-di-trans,octa-cis-undecaprenyl diphosphate + di-trans,octa-cis-undecaprenyl diphosphate + H(+). It participates in cell wall biogenesis; peptidoglycan biosynthesis. Its function is as follows. Peptidoglycan polymerase that catalyzes glycan chain elongation from lipid-linked precursors. The protein is Biosynthetic peptidoglycan transglycosylase of Chromohalobacter salexigens (strain ATCC BAA-138 / DSM 3043 / CIP 106854 / NCIMB 13768 / 1H11).